A 436-amino-acid polypeptide reads, in one-letter code: EPS I polysaccharide export inner membrane protein EpsE (436 aa).

12 consecutive transmembrane segments (helical) span residues 20-40, 49-69, 91-111, 132-152, 160-180, 184-204, 234-254, 261-281, 307-327, 341-361, 375-395, and 396-416; these read VLGLGAAVASRGAVFLVNIML, FGLFSYAYVTALNLGLFLATG, LCAFIVLLVALIAVAATALYL, MAAIVLIATAFTQALQAFLYA, ASVSIGAALLLLAMLWTMGPI, VVALVIFLAINAGAAASQLVI, VLTTSMGAPVHWICLSMLAAM, LALFSVAFQWYIAITFIPATL, ALLFGGGLSLALGCMAFLLAG, AAASMRSLAVAAALCGISVLL, FAMAAVYSVIYVAAAYLALRL, and GYGAPSIGLAMSAAYCCLILF.

The protein to E.coli bicyclomycin resistance protein (BCR).

It localises to the cell inner membrane. Its function is as follows. Probably involved in polymerization and/or export of exopolysaccharide EPS I which functions as a virulence factor. May play a role in export of EPS I or its intermediates across the membranes. This Ralstonia nicotianae (strain ATCC BAA-1114 / GMI1000) (Ralstonia solanacearum) protein is EPS I polysaccharide export inner membrane protein EpsE (epsE).